We begin with the raw amino-acid sequence, 529 residues long: uncharacterized protein (529 aa).

Residues 26-58 (CDSCRKQKTRCLAGSVEDENRACLRCRSLNMDC) constitute a DNA-binding region (zn(2)-C6 fungal-type).

The protein localises to the nucleus. This is an uncharacterized protein from Schizosaccharomyces pombe (strain 972 / ATCC 24843) (Fission yeast).